A 128-amino-acid chain; its full sequence is Cytochrome c-type biogenesis protein CcmE (128 aa).

At 1 to 8 (MQKRVRNR) the chain is on the cytoplasmic side. The helical; Signal-anchor for type II membrane protein transmembrane segment at 9–29 (LITIIICFCSAALGISIVLYN) threads the bilayer. Residues 30-128 (LEKNIVFFLP…KHDENYRPPS (99 aa)) lie on the Periplasmic side of the membrane. Heme is bound by residues His120 and Tyr124.

It belongs to the CcmE/CycJ family.

The protein resides in the cell inner membrane. In terms of biological role, heme chaperone required for the biogenesis of c-type cytochromes. Transiently binds heme delivered by CcmC and transfers the heme to apo-cytochromes in a process facilitated by CcmF and CcmH. The protein is Cytochrome c-type biogenesis protein CcmE of Rickettsia felis (strain ATCC VR-1525 / URRWXCal2) (Rickettsia azadi).